The primary structure comprises 130 residues: Small ribosomal subunit protein uS8 (130 aa).

Belongs to the universal ribosomal protein uS8 family. Part of the 30S ribosomal subunit. Contacts proteins S5 and S12.

Functionally, one of the primary rRNA binding proteins, it binds directly to 16S rRNA central domain where it helps coordinate assembly of the platform of the 30S subunit. This chain is Small ribosomal subunit protein uS8, found in Shewanella pealeana (strain ATCC 700345 / ANG-SQ1).